Here is an 878-residue protein sequence, read N- to C-terminus: Alanine--tRNA ligase (878 aa).

Residues H567, H571, C669, and H673 each coordinate Zn(2+).

Belongs to the class-II aminoacyl-tRNA synthetase family. Zn(2+) is required as a cofactor.

Its subcellular location is the cytoplasm. The enzyme catalyses tRNA(Ala) + L-alanine + ATP = L-alanyl-tRNA(Ala) + AMP + diphosphate. Catalyzes the attachment of alanine to tRNA(Ala) in a two-step reaction: alanine is first activated by ATP to form Ala-AMP and then transferred to the acceptor end of tRNA(Ala). Also edits incorrectly charged Ser-tRNA(Ala) and Gly-tRNA(Ala) via its editing domain. The polypeptide is Alanine--tRNA ligase (Rickettsia conorii (strain ATCC VR-613 / Malish 7)).